Reading from the N-terminus, the 324-residue chain is Anthranilate phosphoribosyltransferase (324 aa).

5-phospho-alpha-D-ribose 1-diphosphate is bound by residues G75, 78 to 79 (GD), T83, 85 to 88 (NVST), 102 to 110 (KHGNFGITG), and S114. G75 contacts anthranilate. S87 contributes to the Mg(2+) binding site. Residue N105 coordinates anthranilate. R160 is an anthranilate binding site. Mg(2+) contacts are provided by D216 and E217.

Belongs to the anthranilate phosphoribosyltransferase family. In terms of assembly, homodimer. Mg(2+) is required as a cofactor.

It catalyses the reaction N-(5-phospho-beta-D-ribosyl)anthranilate + diphosphate = 5-phospho-alpha-D-ribose 1-diphosphate + anthranilate. It functions in the pathway amino-acid biosynthesis; L-tryptophan biosynthesis; L-tryptophan from chorismate: step 2/5. Catalyzes the transfer of the phosphoribosyl group of 5-phosphorylribose-1-pyrophosphate (PRPP) to anthranilate to yield N-(5'-phosphoribosyl)-anthranilate (PRA). The sequence is that of Anthranilate phosphoribosyltransferase from Picrophilus torridus (strain ATCC 700027 / DSM 9790 / JCM 10055 / NBRC 100828 / KAW 2/3).